Reading from the N-terminus, the 571-residue chain is Proline--tRNA ligase (571 aa).

Belongs to the class-II aminoacyl-tRNA synthetase family. ProS type 1 subfamily. As to quaternary structure, homodimer.

It is found in the cytoplasm. The catalysed reaction is tRNA(Pro) + L-proline + ATP = L-prolyl-tRNA(Pro) + AMP + diphosphate. Catalyzes the attachment of proline to tRNA(Pro) in a two-step reaction: proline is first activated by ATP to form Pro-AMP and then transferred to the acceptor end of tRNA(Pro). As ProRS can inadvertently accommodate and process non-cognate amino acids such as alanine and cysteine, to avoid such errors it has two additional distinct editing activities against alanine. One activity is designated as 'pretransfer' editing and involves the tRNA(Pro)-independent hydrolysis of activated Ala-AMP. The other activity is designated 'posttransfer' editing and involves deacylation of mischarged Ala-tRNA(Pro). The misacylated Cys-tRNA(Pro) is not edited by ProRS. In Aliivibrio fischeri (strain MJ11) (Vibrio fischeri), this protein is Proline--tRNA ligase.